The chain runs to 102 residues: Small ribosomal subunit protein uS10 (102 aa).

Belongs to the universal ribosomal protein uS10 family. As to quaternary structure, part of the 30S ribosomal subunit.

In terms of biological role, involved in the binding of tRNA to the ribosomes. This Frankia alni (strain DSM 45986 / CECT 9034 / ACN14a) protein is Small ribosomal subunit protein uS10.